The following is a 125-amino-acid chain: Large-conductance mechanosensitive channel (125 aa).

A run of 2 helical transmembrane segments spans residues 15–35 (MDLA…NSLV) and 67–87 (GSFL…FFLI).

The protein belongs to the MscL family. As to quaternary structure, homopentamer.

It is found in the cell membrane. Its function is as follows. Channel that opens in response to stretch forces in the membrane lipid bilayer. May participate in the regulation of osmotic pressure changes within the cell. In Lactobacillus gasseri (strain ATCC 33323 / DSM 20243 / BCRC 14619 / CIP 102991 / JCM 1131 / KCTC 3163 / NCIMB 11718 / NCTC 13722 / AM63), this protein is Large-conductance mechanosensitive channel.